The following is an 834-amino-acid chain: MAP kinase phosphatase with leucine-rich repeats protein 1 (834 aa).

Residues Met-1–Lys-103 are disordered. Positions Gly-36–Leu-78 are enriched in low complexity. Residues Ala-79–Thr-98 show a composition bias toward polar residues. LRR repeat units follow at residues Glu-160–Leu-181, Asn-183–Leu-204, Ser-206–Lys-226, Ser-229–Glu-251, Asn-252–Asn-273, Ile-274–Leu-292, Ser-298–Leu-319, Asn-321–Ser-342, Ser-345–Leu-366, and Asn-368–Glu-389. Residues Tyr-503 to Lys-584 form a disordered region. Polar residues predominate over residues Asn-511–Ile-536. 2 stretches are compositionally biased toward basic and acidic residues: residues Gln-538–Leu-554 and Lys-569–Gln-582. A coiled-coil region spans residues Gln-555 to Glu-615. One can recognise a Tyrosine-protein phosphatase domain in the interval Val-695–Lys-834. Catalysis depends on Cys-778, which acts as the Phosphocysteine intermediate.

It belongs to the protein-tyrosine phosphatase family. Non-receptor class dual specificity subfamily.

It catalyses the reaction O-phospho-L-tyrosyl-[protein] + H2O = L-tyrosyl-[protein] + phosphate. It carries out the reaction O-phospho-L-seryl-[protein] + H2O = L-seryl-[protein] + phosphate. The catalysed reaction is O-phospho-L-threonyl-[protein] + H2O = L-threonyl-[protein] + phosphate. In terms of biological role, probable phosphatase with dual specificity toward Ser/Thr and Tyr-containing proteins. Dephosphorylates pNPP, in vitro. Essential for proper regulation of erkB (erk2) and optimal motility during development. The protein is MAP kinase phosphatase with leucine-rich repeats protein 1 (mpl1) of Dictyostelium discoideum (Social amoeba).